We begin with the raw amino-acid sequence, 304 residues long: DDRGK domain-containing protein 1 (304 aa).

Residues 1 to 2 lie on the Lumenal side of the membrane; the sequence is MD. The chain crosses the membrane as a helical span at residues 3–23; the sequence is LIILVGIAIALLVVIISLYLL. At 24-304 the chain is on the cytoplasmic side; the sequence is QKKNSTTEAK…LTPVSAEGSS (281 aa). The tract at residues 31 to 174 is disordered; the sequence is EAKPAAAAPQ…AERLAKEERE (144 aa). Low complexity predominate over residues 53–82; that stretch reads RRAQIARNQRNRLRQNAPVAAAAPQAEAPA. Positions 105–174 are enriched in basic and acidic residues; it reads LDEKMGAKKR…AERLAKEERE (70 aa).

This sequence belongs to the DDRGK1 family. In terms of assembly, interacts with Atg9; the interaction is transient.

It is found in the endoplasmic reticulum membrane. Its function is as follows. Substrate adapter for ufmylation, the covalent attachment of the ubiquitin-like modifier UFM1 to substrate proteins. Required for ufmylation of Atg9; protects the nervous system during aging, possibly by stabilizing Atg9 and supporting its function. This is DDRGK domain-containing protein 1 from Drosophila ananassae (Fruit fly).